We begin with the raw amino-acid sequence, 133 residues long: S-protein homolog 9 (133 aa).

Positions 1 to 20 (MNRLSCFLLVIGLCIGLSNA) are cleaved as a signal peptide.

This sequence belongs to the plant self-incompatibility (S1) protein family.

It localises to the secreted. This is S-protein homolog 9 from Arabidopsis thaliana (Mouse-ear cress).